Here is a 354-residue protein sequence, read N- to C-terminus: Serum paraoxonase/arylesterase 2 (354 aa).

Cysteine 42 and cysteine 352 are joined by a disulfide. 2 residues coordinate Ca(2+): glutamate 53 and aspartate 54. Catalysis depends on histidine 114, which acts as the Proton acceptor. Residues isoleucine 116, asparagine 167, aspartate 168, and asparagine 223 each contribute to the Ca(2+) site. Asparagine 254 carries an N-linked (GlcNAc...) asparagine glycan. 2 residues coordinate Ca(2+): aspartate 268 and asparagine 269. 2 N-linked (GlcNAc...) asparagine glycosylation sites follow: asparagine 269 and asparagine 323.

The protein belongs to the paraoxonase family. In terms of assembly, homotrimer. Requires Ca(2+) as cofactor. Post-translationally, glycosylated. In terms of processing, the signal sequence is not cleaved.

The protein localises to the membrane. The catalysed reaction is a phenyl acetate + H2O = a phenol + acetate + H(+). It carries out the reaction an N-acyl-L-homoserine lactone + H2O = an N-acyl-L-homoserine + H(+). Capable of hydrolyzing lactones and a number of aromatic carboxylic acid esters. In Rattus norvegicus (Rat), this protein is Serum paraoxonase/arylesterase 2 (Pon2).